Reading from the N-terminus, the 173-residue chain is Macro domain-containing protein in gbd 3'region (173 aa).

The region spanning 1 to 173 (MSGEHLQVVH…NYRLYRERLS (173 aa)) is the Macro domain.

The protein belongs to the MacroD-type family.

The polypeptide is Macro domain-containing protein in gbd 3'region (Cupriavidus necator (Alcaligenes eutrophus)).